Here is a 333-residue protein sequence, read N- to C-terminus: Procathepsin L (333 aa).

The N-terminal stretch at 1 to 17 is a signal peptide; it reads MNPTFILAALCLGIASA. The propeptide at 18–113 is activation peptide; sequence TLTFNHSLEA…KVFQEPLFYE (96 aa). Glu122 contributes to the Zn(2+) binding site. 2 disulfides stabilise this stretch: Cys135/Cys178 and Cys169/Cys211. Residue Cys138 is part of the active site. Positions 163, 184, 199, 205, 209, 227, 250, 253, 273, and 275 each coordinate Zn(2+). The cysteines at positions 269 and 322 are disulfide-linked. The active site involves His276. The propeptide occupies 289-291; sequence ESD. Asn300 is an active-site residue.

The protein belongs to the peptidase C1 family. Dimer of a heavy and a light chain linked by disulfide bonds. Interacts with Long isoform of CD74/Ii chain; the interaction stabilizes the conformation of mature CTSL. During export along the endocytic pathway, pro-CTSL undergoes several proteolytic cleavages to generate the CTSL single-chain and two-chain mature forms, composed of a heavy chain linked to a light chain by disulfide bonds. Autocleavage; produces the single-chain CTSL after cleavage of the propeptide. The cleavage can be intermolecular.

The protein localises to the lysosome. It is found in the apical cell membrane. Its subcellular location is the cytoplasmic vesicle. It localises to the secretory vesicle. The protein resides in the chromaffin granule. The protein localises to the secreted. It is found in the extracellular space. The catalysed reaction is Specificity close to that of papain. As compared to cathepsin B, cathepsin L exhibits higher activity toward protein substrates, but has little activity on Z-Arg-Arg-NHMec, and no peptidyl-dipeptidase activity.. Its activity is regulated as follows. Inhibited by the propeptide produced by autocleavage. Long isoform of CD74/Ii chain stabilizes the conformation of mature CTSL by binding to its active site and serving as a chaperone to help maintain a pool of mature enzyme in endocytic compartments and extracellular space of APCs. IFNG enhances the conversion into the CTSL mature and active form. Inhibited by CST6. Inhibited by the glycopeptide antibiotic teicoplanin. Inhibited by amantadine. Thiol protease important for the overall degradation of proteins in lysosomes. Plays a critical for normal cellular functions such as general protein turnover, antigen processing and bone remodeling. Involved in the solubilization of cross-linked TG/thyroglobulin and in the subsequent release of thyroid hormone thyroxine (T4) by limited proteolysis of TG/thyroglobulin in the thyroid follicle lumen. In neuroendocrine chromaffin cells secretory vesicles, catalyzes the prohormone proenkephalin processing to the active enkephalin peptide neurotransmitter. In thymus, regulates CD4(+) T cell positive selection by generating the major histocompatibility complex class II (MHCII) bound peptide ligands presented by cortical thymic epithelial cells. Also mediates invariant chain processing in cortical thymic epithelial cells. Major elastin-degrading enzyme at neutral pH. Accumulates as a mature and active enzyme in the extracellular space of antigen presenting cells (APCs) to regulate degradation of the extracellular matrix in the course of inflammation. Secreted form generates endostatin from COL18A1. Critical for cardiac morphology and function. Plays an important role in hair follicle morphogenesis and cycling, as well as epidermal differentiation. Required for maximal stimulation of steroidogenesis by TIMP1. In Chlorocebus aethiops (Green monkey), this protein is Procathepsin L (CTSL).